Here is a 62-residue protein sequence, read N- to C-terminus: Sperm protamine P1 (62 aa).

The segment at 1–62 (MARYRHSXSR…RYSRRRRRRY (62 aa)) is disordered.

Belongs to the protamine P1 family. Testis.

It localises to the nucleus. The protein localises to the chromosome. Its function is as follows. Protamines substitute for histones in the chromatin of sperm during the haploid phase of spermatogenesis. They compact sperm DNA into a highly condensed, stable and inactive complex. The protein is Sperm protamine P1 (PRM1) of Petrogale xanthopus (Yellow-footed rock wallaby).